The primary structure comprises 1255 residues: Period circadian protein homolog 2 (1255 aa).

The interval 1 to 79 (MNGYAEFPPS…EPPDARQSPD (79 aa)) is disordered. Residues 35–56 (SSGSSGHETNENCSTGRDSQGS) are compositionally biased toward polar residues. A Nuclear export signal 1 motif is present at residues 111–120 (LIKTLKELKV). A PAS 1 domain is found at 181 to 248 (VTSEHIVKNA…FHSFTSPYKL (68 aa)). The LXXLL motif lies at 308–312 (LCCLL). The region spanning 321–387 (YEAPRIPPEK…MLAIHKKILQ (67 aa)) is the PAS 2 domain. In terms of domain architecture, PAC spans 395–438 (YSPIRFRARNGEYITLDTSWSSFINPWSRKISFIIGRHKVRVGP). Positions 462 to 471 (LTEQIHRLLL) match the Nuclear export signal 2 motif. 2 disordered regions span residues 473–557 (PVPH…AVPA) and 617–646 (RSSDKRKATVSPGPHAGEAEPPSRVNSRTG). Residues 480–484 (SGYGS) are important for protein stability. Positions 504–516 (NGHEDSRRRRAEI) are enriched in basic and acidic residues. Residues 512–717 (RRAEICKNGN…ALACGLSQEK (206 aa)) are CSNK1E binding domain. 4 positions are modified to phosphoserine: Ser527, Ser530, Ser533, and Ser540. Basic and acidic residues predominate over residues 529–541 (YSHESGEQKKKSV). Ser662, Ser696, Ser700, Ser714, Ser766, and Ser771 each carry phosphoserine. Disordered stretches follow at residues 764–838 (ERSK…DTSQ) and 931–985 (FPSH…QSRS). A Nuclear localization signal motif is present at residues 789 to 805 (KKTGKNRKLKSKRVKPR). Residues 790–803 (KTGKNRKLKSKRVK) show a composition bias toward basic residues. Polar residues-rich tracts occupy residues 829–838 (TAWSPSDTSQ) and 936–956 (TLTSEMASASQPEFPSRTSIP). Residues 888 to 1071 (QFAVQPPPFP…NEDLCSASGS (184 aa)) form an interaction with PPARG region. A Phosphoserine modification is found at Ser945. Residues 959-972 (PCACPATRATPPSA) are compositionally biased toward low complexity. Ser977 is modified (phosphoserine). The Nuclear export signal 3 signature appears at 989–996 (LQLNLLQL). The disordered stretch occupies residues 1018–1050 (VGADCKPGTSRDQQPKAPLTRDEPSDTQNSDAL). Positions 1057-1061 (LNLLL) match the LXXLL motif. A disordered region spans residues 1077–1106 (LGSGSLGCDASPSGAGSSDTSHTSKYFGSI). Over residues 1090–1106 (GAGSSDTSHTSKYFGSI) the composition is skewed to polar residues. Ser1124 is subject to Phosphoserine. Positions 1155–1255 (SRNLEAVLKE…PLNHRIEEQT (101 aa)) are CRY binding domain. The tract at residues 1231 to 1255 (GLSEVSDTKEDENGSPLNHRIEEQT) is disordered.

As to quaternary structure, homodimer. Component of the circadian core oscillator, which includes the CRY proteins, CLOCK or NPAS2, BMAL1 or BMAL2, CSNK1D and/or CSNK1E, TIMELESS, and the PER proteins. Interacts with CLOCK-BMAL1 (off DNA). Interacts with BMAL2. Interacts directly with PER1 and PER3, and through a C-terminal domain, with CRY1 and CRY2. Interacts (via PAS 2 domain) with TIMELESS. Interacts with NFIL3. Different large complexes have been identified with different repressive functions. The core of PER complexes is composed of at least PER1, PER2, PER3, CRY1, CRY2, CSNK1D and/or CSNK1E. The large PER complex involved in the repression of transcriptional termination is composed of at least PER2, CDK9, DDX5, DHX9, NCBP1 and POLR2A (active). The large PER complex involved in the histone deacetylation is composed of at least HDAC1, PER2, SFPQ and SIN3A. The large PER complex involved in the histone methylation is composed of at least PER2, CBX3, TRIM28, SUV39H1 and/or SUV39H2; CBX3 mediates the formation of the complex. Interacts with SETX; the interaction inhibits termination of circadian target genes. Interacts with the nuclear receptors HNF4A, NR1D1, NR4A2, RORA, PPARA, PPARG and THRA; the interaction with at least PPARG is ligand dependent. Interacts with PML. Interacts (phosphorylated) with BTRC and FBXW11; the interactions trigger proteasomal degradation. Interacts with NONO and SFPQ. Interacts with CAVIN3. Interacts with MAGEL2. Interacts with MAP1LC3B. Interacts with HNF4A. Post-translationally, acetylated. Deacetylated by SIRT1, resulting in decreased protein stability. Deacetylated by SIRT6, preventing its degradation by the proteasome, resulting in increased protein stability. Phosphorylated by CSNK1E and CSNK1D. Phosphorylation results in PER2 protein degradation. May be dephosphorylated by PP1. In terms of processing, ubiquitinated, leading to its proteasomal degradation. Ubiquitination may be inhibited by CRY1. As to expression, widely expressed. Found in heart, brain, placenta, lung, liver, skeleatal muscle, kidney and pancreas. High levels in skeletal muscle and pancreas. Low levels in lung. Isoform 2 is expressed in keratinocytes (at protein level).

It is found in the nucleus. It localises to the cytoplasm. The protein localises to the perinuclear region. The protein resides in the nucleolus. Its function is as follows. Transcriptional repressor which forms a core component of the circadian clock. The circadian clock, an internal time-keeping system, regulates various physiological processes through the generation of approximately 24 hour circadian rhythms in gene expression, which are translated into rhythms in metabolism and behavior. It is derived from the Latin roots 'circa' (about) and 'diem' (day) and acts as an important regulator of a wide array of physiological functions including metabolism, sleep, body temperature, blood pressure, endocrine, immune, cardiovascular, and renal function. Consists of two major components: the central clock, residing in the suprachiasmatic nucleus (SCN) of the brain, and the peripheral clocks that are present in nearly every tissue and organ system. Both the central and peripheral clocks can be reset by environmental cues, also known as Zeitgebers (German for 'timegivers'). The predominant Zeitgeber for the central clock is light, which is sensed by retina and signals directly to the SCN. The central clock entrains the peripheral clocks through neuronal and hormonal signals, body temperature and feeding-related cues, aligning all clocks with the external light/dark cycle. Circadian rhythms allow an organism to achieve temporal homeostasis with its environment at the molecular level by regulating gene expression to create a peak of protein expression once every 24 hours to control when a particular physiological process is most active with respect to the solar day. Transcription and translation of core clock components (CLOCK, NPAS2, BMAL1, BMAL2, PER1, PER2, PER3, CRY1 and CRY2) plays a critical role in rhythm generation, whereas delays imposed by post-translational modifications (PTMs) are important for determining the period (tau) of the rhythms (tau refers to the period of a rhythm and is the length, in time, of one complete cycle). A diurnal rhythm is synchronized with the day/night cycle, while the ultradian and infradian rhythms have a period shorter and longer than 24 hours, respectively. Disruptions in the circadian rhythms contribute to the pathology of cardiovascular diseases, cancer, metabolic syndrome and aging. A transcription/translation feedback loop (TTFL) forms the core of the molecular circadian clock mechanism. Transcription factors, CLOCK or NPAS2 and BMAL1 or BMAL2, form the positive limb of the feedback loop, act in the form of a heterodimer and activate the transcription of core clock genes and clock-controlled genes (involved in key metabolic processes), harboring E-box elements (5'-CACGTG-3') within their promoters. The core clock genes: PER1/2/3 and CRY1/2 which are transcriptional repressors form the negative limb of the feedback loop and interact with the CLOCK|NPAS2-BMAL1|BMAL2 heterodimer inhibiting its activity and thereby negatively regulating their own expression. This heterodimer also activates nuclear receptors NR1D1/2 and RORA/B/G, which form a second feedback loop and which activate and repress BMAL1 transcription, respectively. PER1 and PER2 proteins transport CRY1 and CRY2 into the nucleus with appropriate circadian timing, but also contribute directly to repression of clock-controlled target genes through interaction with several classes of RNA-binding proteins, helicases and others transcriptional repressors. PER appears to regulate circadian control of transcription by at least three different modes. First, interacts directly with the CLOCK-BMAL1 at the tail end of the nascent transcript peak to recruit complexes containing the SIN3-HDAC that remodel chromatin to repress transcription. Second, brings H3K9 methyltransferases such as SUV39H1 and SUV39H2 to the E-box elements of the circadian target genes, like PER2 itself or PER1. The recruitment of each repressive modifier to the DNA seems to be very precisely temporally orchestrated by the large PER complex, the deacetylases acting before than the methyltransferases. Additionally, large PER complexes are also recruited to the target genes 3' termination site through interactions with RNA-binding proteins and helicases that may play a role in transcription termination to regulate transcription independently of CLOCK-BMAL1 interactions. Recruitment of large PER complexes to the elongating polymerase at PER and CRY termination sites inhibited SETX action, impeding RNA polymerase II release and thereby repressing transcriptional reinitiation. May propagate clock information to metabolic pathways via the interaction with nuclear receptors. Coactivator of PPARA and corepressor of NR1D1, binds rhythmically at the promoter of nuclear receptors target genes like BMAL1 or G6PC1. Directly and specifically represses PPARG proadipogenic activity by blocking PPARG recruitment to target promoters and thereby inhibiting transcriptional activation. Required for fatty acid and lipid metabolism, is involved as well in the regulation of circulating insulin levels. Plays an important role in the maintenance of cardiovascular functions through the regulation of NO and vasodilatatory prostaglandins production in aortas. Controls circadian glutamate uptake in synaptic vesicles through the regulation of VGLUT1 expression. May also be involved in the regulation of inflammatory processes. Represses the CLOCK-BMAL1 induced transcription of BHLHE40/DEC1 and ATF4. Negatively regulates the formation of the TIMELESS-CRY1 complex by competing with TIMELESS for binding to CRY1. The protein is Period circadian protein homolog 2 (PER2) of Homo sapiens (Human).